A 188-amino-acid polypeptide reads, in one-letter code: tRNA(Phe) 7-((3-amino-3-carboxypropyl)-4-demethylwyosine(37)-N(4))-methyltransferase (188 aa).

Belongs to the TYW3 family.

It carries out the reaction 4-demethyl-7-[(3S)-3-amino-3-carboxypropyl]wyosine(37) in tRNA(Phe) + S-adenosyl-L-methionine = 7-[(3S)-3-amino-3-carboxypropyl]wyosine(37) in tRNA(Phe) + S-adenosyl-L-homocysteine + H(+). In terms of biological role, S-adenosyl-L-methionine-dependent methyltransferase that acts as a component of the wyosine derivatives biosynthesis pathway. Probably methylates N-4 position of wybutosine-86 to produce wybutosine-72. The chain is tRNA(Phe) 7-((3-amino-3-carboxypropyl)-4-demethylwyosine(37)-N(4))-methyltransferase from Aeropyrum pernix (strain ATCC 700893 / DSM 11879 / JCM 9820 / NBRC 100138 / K1).